Consider the following 489-residue polypeptide: Cytochrome P450 2C70 (489 aa).

The N-terminal stretch at 1 to 27 (MALFIFLGIWLSCLVFLFLWNQHHVRR) is a signal peptide. Position 434 (Cys434) interacts with heme.

It belongs to the cytochrome P450 family. It depends on heme as a cofactor.

It is found in the endoplasmic reticulum membrane. The protein localises to the microsome membrane. The catalysed reaction is chenodeoxycholate + reduced [NADPH--hemoprotein reductase] + O2 = alpha-muricholate + oxidized [NADPH--hemoprotein reductase] + H2O + H(+). The enzyme catalyses ursodeoxycholate + reduced [NADPH--hemoprotein reductase] + O2 = beta-muricholate + oxidized [NADPH--hemoprotein reductase] + H2O + H(+). In terms of biological role, a cytochrome P450 monooxygenase involved in muricholic acid (MCA) synthesis. Hydroxylates at the 6-beta position two major bile acids, chenodeoxycholic acid (CDCA) and ursodeoxycholic acid (UDCA) to form alpha-MCA and beta-MCA, respectively. May regulate NR1H4/farnesoid X receptor signaling, as taurine-conjugated MCAs are antagonists of NR1H4. Mechanistically, uses molecular oxygen inserting one oxygen atom into a substrate, and reducing the second into a water molecule, with two electrons provided by NADPH via cytochrome P450 reductase (CPR; NADPH-ferrihemoprotein reductase). This Rattus norvegicus (Rat) protein is Cytochrome P450 2C70.